A 1116-amino-acid polypeptide reads, in one-letter code: Phosphatidylinositol 4-kinase beta 2 (1116 aa).

Residues 1–143 enclose the PIK helical domain; the sequence is MQMAQFLSLV…SRIQEKCQIA (143 aa). Repeat copies occupy residues 210 to 229, 242 to 261, 264 to 283, 286 to 304, 307 to 326, 329 to 348, 351 to 370, and 378 to 396. Residues 210–507 are 11 X 20 AA approximate repeats (PPC); it reads ADDNKIFKRL…FRDRDRSVED (298 aa). Residues 394 to 404 show a composition bias toward basic and acidic residues; that stretch reads EKRNGNERNET. Residues 394-417 are disordered; sequence EKRNGNERNETDETVYTDETSGED. The segment covering 405 to 415 has biased composition (acidic residues); the sequence is DETVYTDETSG. Copy 9 of the repeat occupies 418 to 436; that stretch reads NGREGFFKKLFKEKFEDKP. 2 positions are modified to phosphoserine: Ser-447 and Ser-452. 2 repeat units span residues 452–470 and 488–507. Disordered stretches follow at residues 515–540 and 794–813; these read KYKE…LPNN and GEAP…SDAQ. The PI3K/PI4K catalytic domain occupies 830 to 1101; it reads EFWEGKRLRI…LISSSLDAWR (272 aa). Residues 836-842 are G-loop; the sequence is RLRIRKD. Positions 964 to 972 are catalytic loop; that stretch reads QIKDRHNGN. An activation loop region spans residues 983-1007; sequence HIDFGFMLSNSPGGVNFESAPFKLT.

The protein belongs to the PI3/PI4-kinase family. Type III PI4K subfamily.

The protein localises to the cell membrane. It localises to the golgi apparatus. It is found in the trans-Golgi network. The protein resides in the cytoplasmic vesicle membrane. It carries out the reaction a 1,2-diacyl-sn-glycero-3-phospho-(1D-myo-inositol) + ATP = a 1,2-diacyl-sn-glycero-3-phospho-(1D-myo-inositol 4-phosphate) + ADP + H(+). Acts on phosphatidylinositol (PtdIns) in the first committed step in the production of the second messenger inositol-1,4,5-trisphosphate. Necessary for proper organization of the trans-Golgi network (TGN) and post-Golgi secretion in root hairs. Together with PI4KB1, required during polarized root hair expansion and pollen tube elongation. Functions redundantly with PI4KB1 upstream of the cold response phosphoinositide-dependent phospholipase C (PI-PLC) pathway. This Arabidopsis thaliana (Mouse-ear cress) protein is Phosphatidylinositol 4-kinase beta 2 (PI4KB2).